A 914-amino-acid polypeptide reads, in one-letter code: Dynamin-2A (914 aa).

Methionine 1 is subject to N-acetylmethionine. The region spanning 35-303 (PATFLNVVAL…IRSRMKLRLP (269 aa)) is the Dynamin-type G domain. The G1 motif stretch occupies residues 45 to 52 (GNVGAGKS). Position 45 to 52 (45 to 52 (GNVGAGKS)) interacts with GTP. Positions 71 to 73 (ATR) are G2 motif. The segment at 143–146 (DLPG) is G3 motif. Residues 143–147 (DLPGL) and 204–207 (GKID) contribute to the GTP site. The interval 204–207 (GKID) is G4 motif. Positions 238–241 (AVIG) are G5 motif. Basic and acidic residues predominate over residues 507–522 (RREEELKGRSSKKGQD). Disordered regions lie at residues 507-570 (RREE…TAGP) and 629-648 (PEDEVEKSKSSKDKKANGPD). Polar residues predominate over residues 523–535 (AEQSLLSRATSPQ). 2 stretches are compositionally biased toward basic and acidic residues: residues 547 to 560 (SMKDKPSPQDKETP) and 634 to 645 (EKSKSSKDKKAN). The 125-residue stretch at 572-696 (GEITAGYLMK…WINKLQKVIQ (125 aa)) folds into the PH domain. Residues 730 to 823 (LRWMSQEVRG…QLSIHDNRAA (94 aa)) form the GED domain. Residues 781–805 (NERIESLIQEDQNVKRRRERYQKQS) are a coiled coil. Positions 821–914 (RAAAASSYSD…PPPTGSAYRY (94 aa)) are disordered. 2 stretches are compositionally biased toward polar residues: residues 826-839 (SSYSDNSGTESSPR) and 852-866 (AFNSAANGPSDSLSK).

This sequence belongs to the TRAFAC class dynamin-like GTPase superfamily. Dynamin/Fzo/YdjA family. In terms of assembly, binds PtdIns3P. Interacts with SH3P3 (via SH3 domain) and (via C-terminus) with GAMMA-ADR. May homooligomerize or heterooligomerize.

The protein resides in the cytoplasm. It is found in the cytosol. Its subcellular location is the golgi apparatus membrane. The protein localises to the cytoskeleton. It localises to the phragmoplast. The protein resides in the cytoplasmic vesicle. It is found in the clathrin-coated vesicle. It catalyses the reaction GTP + H2O = GDP + phosphate + H(+). Its activity is regulated as follows. Increased GTPase activity in the presence of phosphatidic acid. Microtubule-associated force-producing protein involved in clathrin-mediated vesicle trafficking from the trans-Golgi network to the central vacuole. Able to bind and hydrolyze GTP. Binds specifically to phosphatidylinositol 3-phosphate (PtdIns3P). The sequence is that of Dynamin-2A (DRP2A) from Arabidopsis thaliana (Mouse-ear cress).